Here is a 371-residue protein sequence, read N- to C-terminus: Cytochrome b (371 aa).

Helical transmembrane passes span 25–45, 69–90, 105–125, and 170–190; these read FGSMLLTCSALQVMTGFSLSM, WVMQNLHAIGASMFFICIYMYI, WLSGTTLLIMLMATAFFGYVL, and FFALHFILPFGIISVSSIHIM. Histidine 75 is a heme b binding site. Heme b-binding residues include histidine 174 and histidine 188. Histidine 193 is an a ubiquinone binding site. Transmembrane regions (helical) follow at residues 218–238, 280–300, 312–332, and 339–358; these read YKDILMISIMIITLLLTVSFF, LGGALALVMSIMILFTMPFTH, LMQFMFWTLVATFVIITWTAT, and FTTISQVASIIYFTFFMSNP.

It belongs to the cytochrome b family. As to quaternary structure, the cytochrome bc1 complex contains 3 respiratory subunits (MT-CYB, CYC1 and UQCRFS1), 2 core proteins (UQCRC1 and UQCRC2) and probably 6 low-molecular weight proteins. It depends on heme b as a cofactor.

The protein resides in the mitochondrion inner membrane. In terms of biological role, component of the ubiquinol-cytochrome c reductase complex (complex III or cytochrome b-c1 complex) that is part of the mitochondrial respiratory chain. The b-c1 complex mediates electron transfer from ubiquinol to cytochrome c. Contributes to the generation of a proton gradient across the mitochondrial membrane that is then used for ATP synthesis. The polypeptide is Cytochrome b (MT-CYB) (Candoia aspera (New Guinea boa)).